The sequence spans 153 residues: Pheromone-binding protein Gp-9 (153 aa).

An N-terminal signal peptide occupies residues 1–19 (MKTFVLHIFIFALVAFASA). 3 cysteine pairs are disulfide-bonded: C37-C77, C73-C129, and C118-C138.

It belongs to the PBP/GOBP family. Homodimer.

The protein localises to the secreted. In terms of biological role, colony queen number, a major feature of social organization, is associated with worker genotype for Gp-9. Colonies are headed by either a single reproductive queen (monogyne form) or multiple queens (polygyne form). Differences in worker Gp-9 genotypes between social forms may cause differences in workers' abilities to recognize queens and regulate their numbers. The protein is Pheromone-binding protein Gp-9 of Solenopsis daguerrei (Workerless parasitic ant).